A 528-amino-acid polypeptide reads, in one-letter code: GMP synthase [glutamine-hydrolyzing] (528 aa).

A Glutamine amidotransferase type-1 domain is found at Ser13 to Asp204. The active-site Nucleophile is Cys90. Residues His178 and Glu180 contribute to the active site. The GMPS ATP-PPase domain occupies Trp205–Arg403. Ser232 to Ser238 provides a ligand contact to ATP.

In terms of assembly, homodimer.

The catalysed reaction is XMP + L-glutamine + ATP + H2O = GMP + L-glutamate + AMP + diphosphate + 2 H(+). It participates in purine metabolism; GMP biosynthesis; GMP from XMP (L-Gln route): step 1/1. Catalyzes the synthesis of GMP from XMP. This chain is GMP synthase [glutamine-hydrolyzing], found in Prochlorococcus marinus (strain SARG / CCMP1375 / SS120).